Consider the following 625-residue polypeptide: Protein arginine N-methyltransferase skb1 (625 aa).

The SAM-dependent MTase PRMT-type domain occupies 280 to 588 (LQVPLQPLSY…WRLTDGMRVW (309 aa)). Residues Tyr-296, 305 to 306 (KY), Glu-359, and 386 to 387 (DM) contribute to the S-adenosyl-L-methionine site. Residues Glu-402 and Glu-411 each act as proton donor/acceptor in the active site.

This sequence belongs to the class I-like SAM-binding methyltransferase superfamily. Protein arginine N-methyltransferase family. As to quaternary structure, interacts with the N-terminal regulatory domain of shk1. Shk1, cdc42 and skb1 are able to form a ternary complex in vivo. Interacts with orb6. Interacts with Cdr1 and the Cdr1 inhibitory target Wee1.

The protein resides in the nucleus. It localises to the cell tip. It is found in the cell septum. Its subcellular location is the cytoplasm. The protein localises to the cell cortex. Functionally, S-adenosyl-L-methionine-dependent protein-arginine N-methyltransferase that can catalyze both the mono- and symmetric (type II) dimethylation of the guanidino nitrogens of arginine residues in target proteins. Delays mitotic entry by inhibiting the Cdr1-Wee1 signaling pathway. Cortical nodes sequester Skb1 from its regulatory targets Cdr1 and Wee1. Positively modulates the shk1 kinase function. May be a mediator of hyperosmotic stress response. Involved in the control of cell polarity by regulating the subcellular localization of Orb6 kinase. This Schizosaccharomyces pombe (strain 972 / ATCC 24843) (Fission yeast) protein is Protein arginine N-methyltransferase skb1.